The sequence spans 98 residues: Class II hydrophobin 2 (98 aa).

A signal peptide spans Met1–Ala21. 4 disulfide bridges follow: Cys34–Cys80, Cys41–Cys71, Cys42–Cys54, and Cys81–Cys92.

Belongs to the cerato-ulmin hydrophobin family.

Its subcellular location is the secreted. The protein localises to the cell wall. Functionally, aerial growth, conidiation, and dispersal of filamentous fungi in the environment rely upon a capability of their secreting small amphipathic proteins called hydrophobins (HPBs) with low sequence identity. Class I can self-assemble into an outermost layer of rodlet bundles on aerial cell surfaces, conferring cellular hydrophobicity that supports fungal growth, development and dispersal; whereas Class II form highly ordered films at water-air interfaces through intermolecular interactions but contribute nothing to the rodlet structure. In Botryotinia fuckeliana, hydrophobins are not involved in conferring surface hydrophobicity to conidia and aerial hyphae and their function in sclerotia and fruiting bodies remains to be investigated. In Botryotinia fuckeliana (strain B05.10) (Noble rot fungus), this protein is Class II hydrophobin 2.